Consider the following 154-residue polypeptide: CASP-like protein ARALYDRAFT_485429 (154 aa).

Over 1 to 12 (MENVPGSFGTSA) the chain is Cytoplasmic. A helical membrane pass occupies residues 13–33 (SFALRFGQTIFSAASLIFMCF). Topologically, residues 34-41 (DYDFYDFT) are extracellular. The chain crosses the membrane as a helical span at residues 42 to 62 (TFCYLATVMAIVTPWSILLAL). The Cytoplasmic segment spans residues 63-81 (TDTYSVLVKLLPQELRVLS). The chain crosses the membrane as a helical span at residues 82 to 102 (IVFAGDFVLSFLSLGGACAVA). Topologically, residues 103-128 (SATELLASADGKICDGNLCIQYQVSA) are extracellular. A helical transmembrane segment spans residues 129–149 (ALAFLCWFLLLASALFNFWSL). The Cytoplasmic segment spans residues 150–154 (PSLYY).

The protein belongs to the Casparian strip membrane proteins (CASP) family. As to quaternary structure, homodimer and heterodimers.

It is found in the cell membrane. In Arabidopsis lyrata subsp. lyrata (Lyre-leaved rock-cress), this protein is CASP-like protein ARALYDRAFT_485429.